Reading from the N-terminus, the 202-residue chain is IMP cyclohydrolase (202 aa).

It belongs to the archaeal IMP cyclohydrolase family.

It catalyses the reaction IMP + H2O = 5-formamido-1-(5-phospho-D-ribosyl)imidazole-4-carboxamide. It functions in the pathway purine metabolism; IMP biosynthesis via de novo pathway; IMP from 5-formamido-1-(5-phospho-D-ribosyl)imidazole-4-carboxamide: step 1/1. Functionally, catalyzes the cyclization of 5-formylamidoimidazole-4-carboxamide ribonucleotide to IMP. This Methanothermobacter thermautotrophicus (strain ATCC 29096 / DSM 1053 / JCM 10044 / NBRC 100330 / Delta H) (Methanobacterium thermoautotrophicum) protein is IMP cyclohydrolase.